A 186-amino-acid chain; its full sequence is UPF0301 protein Saro_0683 (186 aa).

This sequence belongs to the UPF0301 (AlgH) family.

This chain is UPF0301 protein Saro_0683, found in Novosphingobium aromaticivorans (strain ATCC 700278 / DSM 12444 / CCUG 56034 / CIP 105152 / NBRC 16084 / F199).